Here is a 410-residue protein sequence, read N- to C-terminus: Voltage-dependent chloride channel 2, chloroplastic (410 aa).

The Lumenal, thylakoid portion of the chain corresponds to 1–110 (MYQSMNLSFS…RHVSSSPSSR (110 aa)). The helical transmembrane segment at 111–131 (VILSLIPPVFFFTTVAILIAG) threads the bilayer. The Stromal portion of the chain corresponds to 132 to 147 (YNSAVDLDWLPDFFPV). The chain crosses the membrane as a helical span at residues 148–168 (LRASPLPYQLTAPALALLLVF). Residues 169–315 (RTEASYSRFE…PLSYTRLTSR (147 aa)) are Lumenal, thylakoid-facing. 2 helical membrane passes run 316–336 (FLVL…HWNV) and 337–357 (VPAT…GVLI). At 358-410 (EEPFSMLALDELCAMVLSNSDEAVESKEVIRNRIIAKKRILEIKHSSNGWHKS) the chain is on the lumenal, thylakoid side.

It belongs to the anion channel-forming bestrophin (TC 1.A.46) family. Voltage-dependent chloride channel subfamily. As to expression, mostly expressed in flowers and, to a lower extent, in leaves, stems and roots.

Its subcellular location is the plastid. It localises to the chloroplast thylakoid membrane. The catalysed reaction is chloride(in) = chloride(out). Functionally, voltage-dependent chloride (Cl) channel probably contributing to proton motive force (PMF) partitioning across the thylakoid membrane by anion influx into the lumen. Influences thylakoid ultrastructure, including lumen size and organization. This chain is Voltage-dependent chloride channel 2, chloroplastic, found in Arabidopsis thaliana (Mouse-ear cress).